The sequence spans 367 residues: tRNA/tmRNA (uracil-C(5))-methyltransferase (367 aa).

S-adenosyl-L-methionine is bound by residues Q190, Y218, N223, E239, and D299. The active-site Nucleophile is C324. The Proton acceptor role is filled by E358.

It belongs to the class I-like SAM-binding methyltransferase superfamily. RNA M5U methyltransferase family. TrmA subfamily.

The catalysed reaction is uridine(54) in tRNA + S-adenosyl-L-methionine = 5-methyluridine(54) in tRNA + S-adenosyl-L-homocysteine + H(+). The enzyme catalyses uridine(341) in tmRNA + S-adenosyl-L-methionine = 5-methyluridine(341) in tmRNA + S-adenosyl-L-homocysteine + H(+). In terms of biological role, dual-specificity methyltransferase that catalyzes the formation of 5-methyluridine at position 54 (m5U54) in all tRNAs, and that of position 341 (m5U341) in tmRNA (transfer-mRNA). This Yersinia pestis bv. Antiqua (strain Antiqua) protein is tRNA/tmRNA (uracil-C(5))-methyltransferase.